A 256-amino-acid polypeptide reads, in one-letter code: DNA repair protein RecO (256 aa).

It belongs to the RecO family.

Functionally, involved in DNA repair and RecF pathway recombination. The sequence is that of DNA repair protein RecO from Streptococcus pneumoniae (strain Hungary19A-6).